The following is a 360-amino-acid chain: DNA replication and repair protein RecF (360 aa).

Position 30 to 37 (30 to 37 (GQNGSGKT)) interacts with ATP.

Belongs to the RecF family.

The protein resides in the cytoplasm. In terms of biological role, the RecF protein is involved in DNA metabolism; it is required for DNA replication and normal SOS inducibility. RecF binds preferentially to single-stranded, linear DNA. It also seems to bind ATP. The sequence is that of DNA replication and repair protein RecF from Shewanella piezotolerans (strain WP3 / JCM 13877).